Here is a 479-residue protein sequence, read N- to C-terminus: Heparin cofactor 2 (479 aa).

Residues 1–23 (MKHPAYTLLLSLIMSMCAGSKGL) form the signal peptide. Asparagine 31 carries an N-linked (GlcNAc...) asparagine glycan. 2 consecutive repeat copies span residues 55–65 (GEEDDDYLDLE) and 69–79 (SEDDDYIYVVD). The segment at 55-79 (GEEDDDYLDLEKLLSEDDDYIYVVD) is 2 X 11 AA approximate repeats, Asp/Glu-rich (acidic) (hirudin-like). Sulfotyrosine is present on residues tyrosine 61 and tyrosine 74. Asparagine 168 carries N-linked (GlcNAc...) asparagine glycosylation. Residues 172–192 (KYEVTTIHNLFRKLTHRLFRR) are glycosaminoglycan-binding site. Residues asparagine 367 and asparagine 403 are each glycosylated (N-linked (GlcNAc...) asparagine).

Belongs to the serpin family. In terms of processing, different composition of the N-linked oligosaccharides appears to yield a 68-kDa and a 72-kDa form.

Its function is as follows. Thrombin inhibitor activated by the glycosaminoglycans, heparin or dermatan sulfate. In the presence of the latter, HC-II becomes the predominant thrombin inhibitor in place of antithrombin III (AT). This is Heparin cofactor 2 (Serpind1) from Rattus norvegicus (Rat).